Reading from the N-terminus, the 388-residue chain is 3beta-hydroxysteroid dehydrogenase dhs-16 (388 aa).

The chain crosses the membrane as a helical span at residues 2-22 (LELIYILPLLCFVYFLFRRFV). The active-site Proton acceptor is tyrosine 188. The next 2 membrane-spanning stretches (helical) occupy residues 300 to 320 (AIFMFIPLSIFPTALQDWILA) and 346 to 366 (IQWIQFLSQIAIIPLLYTIFF).

It belongs to the short-chain dehydrogenases/reductases (SDR) family. In terms of tissue distribution, strongly expressed in the hypodermis and posterior pharyngeal bulb and in a number of unidentified neurons of the head and tail.

The protein resides in the membrane. The enzyme catalyses lathosterol + NAD(+) = 5alpha-cholest-7-en-3-one + NADH + H(+). Its pathway is steroid hormone biosynthesis; dafachronic acid biosynthesis. 3beta-hydroxysteroid dehydrogenase that converts 3beta-hydroxysteroids to 3-ketosteroids, an essential step in the production of dafachronic acids from cholesterol. Catalyzes the dehydrogenation of lathosterol (5alpha-cholest-7-en-3beta-ol) to lathosterone (5alpha-cholest-7-en-3-one), a step required for maximal biosynthesis of Delta(7)-dafachronic acid. Dafachronic acids act as ligands and bind directly to the nuclear hormone receptor (NHR) daf-12, suppressing dauer formation and inducing reproductive growth, they can also regulate C.elegans lifespan. This is 3beta-hydroxysteroid dehydrogenase dhs-16 (dhs-16) from Caenorhabditis elegans.